A 421-amino-acid polypeptide reads, in one-letter code: Peroxisomal succinyl-coenzyme A thioesterase (421 aa).

Serine 232 (charge relay system) is an active-site residue. An N6-succinyllysine modification is found at lysine 313. Active-site charge relay system residues include aspartate 326 and histidine 360. Residues 419-421 (CRL) carry the Microbody targeting signal motif.

The protein belongs to the C/M/P thioester hydrolase family. Mainly expressed in liver and kidney. Weakly expressed in other tissues including intestine, adrenal gland and adipose tissues.

The protein resides in the peroxisome. It catalyses the reaction succinyl-CoA + H2O = succinate + CoA + H(+). It carries out the reaction glutaryl-CoA + H2O = glutarate + CoA + H(+). It functions in the pathway lipid metabolism; fatty acid metabolism. Functionally, catalyzes the hydrolysis of acyl-CoAs into free fatty acids and coenzyme A (CoASH), regulating their respective intracellular levels. In contrast to its human ortholog, functions essentially as a succinyl-CoA thioesterase with no activity with medium to long chain saturated acyl-CoAs and with a low activity toward glutaryl-CoA. The protein is Peroxisomal succinyl-coenzyme A thioesterase (Acot4) of Mus musculus (Mouse).